The following is a 412-amino-acid chain: MQLGFAMLADPILLITILLGFAMAWAIGANDAANSMSTAVGAGAITPRQAVIIAGVLEFMGAYFFGKTVTETIRKGIIDPSKITDPNVLIFGSIAALIGATIWLVIATKYGLPVSTTHSIIGGIVGYGIVYGGMSIVNWDKMIKVVLSWILSPIVGAIFAYLVFRALSKTVLQSKDPVKSAKRWSPFWIGLAFVVIGTMFYIKVLHGNSLLEGFLKYGMPAGILTFIVVSLILEKRFPATDPYLGAERVFRRVQVITSAYVALAHGANDVANAIGPVAAVYTVAMFGLAGAKVPVPRWILALGGLGIAIGVATYGYKVMETVGKKITELTNTRGFTIDFSAATVVLIASWLGMPISTTHTVVGAVIGVGLARGIKAINKDIVKDIIISWFVTVPAAGVIAGIIFKALMMLMG.

Helical transmembrane passes span 7–27 (MLAD…AWAI), 50–70 (AVII…KTVT), 88–108 (VLIF…VIAT), 119–139 (SIIG…IVNW), 143–163 (IKVV…AYLV), 187–207 (FWIG…VLHG), 213–233 (GFLK…SLIL), 298–318 (WILA…GYKV), 335–355 (FTID…GMPI), and 384–404 (DIII…GIIF).

Belongs to the inorganic phosphate transporter (PiT) (TC 2.A.20) family.

It is found in the cell membrane. Functionally, potential transporter for phosphate. The sequence is that of Putative phosphate permease PF1020 from Pyrococcus furiosus (strain ATCC 43587 / DSM 3638 / JCM 8422 / Vc1).